Reading from the N-terminus, the 204-residue chain is Pantothenate transporter PanT (204 aa).

Helical transmembrane passes span 18 to 38, 39 to 59, 63 to 83, 86 to 106, 123 to 143, and 176 to 196; these read IILL…AVIV, GAQP…LGAR, FIGG…PGSI, LMFQ…LIIG, LGLG…VVLL, and IFEI…LVPI.

In terms of assembly, in E.coli forms a stable energy-coupling factor (ECF) transporter complex probably composed of a membrane-embedded substrate-binding protein (S component), two ATP-binding proteins (A components) and a transmembrane protein (T component).

The protein resides in the cell membrane. In terms of biological role, probable pantothenate-binding protein that interacts with the energy-coupling factor (ECF) ABC-transporter complex. Unlike classic ABC transporters this ECF transporter provides the energy necessary to transport a number of different substrates. The substrates themselves are bound by transmembrane, not extracytoplasmic soluble proteins and transport it into cells. Upon coexpression with its energy-coupling factor (ECF) ABC-transporter complex EcfA1A2T in E.coli allows pantothenate uptake; uptake requires both PanT and EcfA1A2T. In Leuconostoc mesenteroides subsp. mesenteroides (strain ATCC 8293 / DSM 20343 / BCRC 11652 / CCM 1803 / JCM 6124 / NCDO 523 / NBRC 100496 / NCIMB 8023 / NCTC 12954 / NRRL B-1118 / 37Y), this protein is Pantothenate transporter PanT (panT).